The primary structure comprises 193 residues: Probable type II restriction enzyme HpyAORF263P (193 aa).

It belongs to the BsaWI type II restriction endonuclease family.

It catalyses the reaction Endonucleolytic cleavage of DNA to give specific double-stranded fragments with terminal 5'-phosphates.. Its function is as follows. A P subtype probable restriction enzyme that recognizes the double-stranded sequence CCGG; the cleavage site is unknown. The protein is Probable type II restriction enzyme HpyAORF263P of Helicobacter pylori (strain ATCC 700392 / 26695) (Campylobacter pylori).